The primary structure comprises 400 residues: PHD finger protein 24 (400 aa).

Gly-2 is lipidated: N-myristoyl glycine. A compositionally biased stretch (basic and acidic residues) spans 28 to 38 (LRDRPSIRRTG). Positions 28–99 (LRDRPSIRRT…PEEFDRTSRF (72 aa)) are disordered. Arg-36 is subject to Omega-N-methylarginine. At Ser-43 the chain carries Phosphoserine. Position 47 is a phosphothreonine (Thr-47). Position 51 is a phosphoserine (Ser-51). Residues 78–97 (AWERLRDGRGVEPEEFDRTS) show a composition bias toward basic and acidic residues. The segment at 129-190 (NDEMCDVCEV…TGWSCHYCDN (62 aa)) adopts a PHD-type zinc-finger fold.

The polypeptide is PHD finger protein 24 (Homo sapiens (Human)).